The chain runs to 333 residues: Glyoxylate reductase (333 aa).

Residues 158-161, 180-182, and 239-241 contribute to the NADP(+) site; these read FGRI, SRS, and IAR. Active-site residues include Arg241 and Glu270. The active-site Proton donor is the His288. Position 288–290 (288–290) interacts with NADP(+); it reads HIG.

It belongs to the D-isomer specific 2-hydroxyacid dehydrogenase family. GyaR subfamily. Homodimer.

Its subcellular location is the cytoplasm. The enzyme catalyses glycolate + NAD(+) = glyoxylate + NADH + H(+). This is Glyoxylate reductase from Thermococcus kodakarensis (strain ATCC BAA-918 / JCM 12380 / KOD1) (Pyrococcus kodakaraensis (strain KOD1)).